We begin with the raw amino-acid sequence, 341 residues long: Methionine import ATP-binding protein MetN 1 (341 aa).

The ABC transporter domain occupies 2–241 (IKLNQIVKRY…PQHEVTKRFV (240 aa)). 38–45 (GFSGAGKS) lines the ATP pocket.

The protein belongs to the ABC transporter superfamily. Methionine importer (TC 3.A.1.24) family. As to quaternary structure, the complex is composed of two ATP-binding proteins (MetN), two transmembrane proteins (MetI) and a solute-binding protein (MetQ).

It is found in the cell membrane. The enzyme catalyses L-methionine(out) + ATP + H2O = L-methionine(in) + ADP + phosphate + H(+). It carries out the reaction D-methionine(out) + ATP + H2O = D-methionine(in) + ADP + phosphate + H(+). Its function is as follows. Part of the ABC transporter complex MetNIQ involved in methionine import. Responsible for energy coupling to the transport system. In Staphylococcus epidermidis (strain ATCC 12228 / FDA PCI 1200), this protein is Methionine import ATP-binding protein MetN 1.